Reading from the N-terminus, the 105-residue chain is Integration host factor subunit beta (105 aa).

Belongs to the bacterial histone-like protein family. As to quaternary structure, heterodimer of an alpha and a beta chain.

Functionally, this protein is one of the two subunits of integration host factor, a specific DNA-binding protein that functions in genetic recombination as well as in transcriptional and translational control. The sequence is that of Integration host factor subunit beta from Nitrosomonas europaea (strain ATCC 19718 / CIP 103999 / KCTC 2705 / NBRC 14298).